The chain runs to 308 residues: MQEKISKFEDFLTQLQQNITTALEQHETNAAKFISDKWQKPDTHDQKLKGYGNSMIIEGGEIFEKGVVAFSRVHGSELPPSATAKRQELAGKSFIATGLSLVIHPRNPFVPTSHANFRIFIAGADTDNPIWWFGGGFDLTPYYPFEEDAIHWHQTAKNICDKHDKTYYPKFKKWCDEYFYLKHRDECRGVGGLFFDDLNDKSFDECFNFVTDCANSYLDAYIPIVAQRKNIEYSQKHKDFQLYRRGRYVEFNLVFDRGTIFGLQSGGRTESILSSMPPIATWKYNWQPELGSEEEKVYQYIKPRDWIK.

Residue serine 100 coordinates substrate. Residues histidine 104 and histidine 114 each contribute to the a divalent metal cation site. Histidine 114 serves as the catalytic Proton donor. Position 116–118 (116–118) interacts with substrate; sequence NFR. Positions 153 and 183 each coordinate a divalent metal cation. Residues 248–283 are important for dimerization; that stretch reads YVEFNLVFDRGTIFGLQSGGRTESILSSMPPIATWK. A substrate-binding site is contributed by 266-268; that stretch reads GGR.

This sequence belongs to the aerobic coproporphyrinogen-III oxidase family. In terms of assembly, homodimer. A divalent metal cation is required as a cofactor.

Its subcellular location is the cytoplasm. The catalysed reaction is coproporphyrinogen III + O2 + 2 H(+) = protoporphyrinogen IX + 2 CO2 + 2 H2O. The protein operates within porphyrin-containing compound metabolism; protoporphyrin-IX biosynthesis; protoporphyrinogen-IX from coproporphyrinogen-III (O2 route): step 1/1. Involved in the heme biosynthesis. Catalyzes the aerobic oxidative decarboxylation of propionate groups of rings A and B of coproporphyrinogen-III to yield the vinyl groups in protoporphyrinogen-IX. This chain is Oxygen-dependent coproporphyrinogen-III oxidase, found in Francisella tularensis subsp. tularensis (strain FSC 198).